A 342-amino-acid chain; its full sequence is Nicotinate-nucleotide--dimethylbenzimidazole phosphoribosyltransferase (342 aa).

Residue glutamate 311 is the Proton acceptor of the active site.

This sequence belongs to the CobT family.

The enzyme catalyses 5,6-dimethylbenzimidazole + nicotinate beta-D-ribonucleotide = alpha-ribazole 5'-phosphate + nicotinate + H(+). Its pathway is nucleoside biosynthesis; alpha-ribazole biosynthesis; alpha-ribazole from 5,6-dimethylbenzimidazole: step 1/2. In terms of biological role, catalyzes the synthesis of alpha-ribazole-5'-phosphate from nicotinate mononucleotide (NAMN) and 5,6-dimethylbenzimidazole (DMB). This Vibrio vulnificus (strain CMCP6) protein is Nicotinate-nucleotide--dimethylbenzimidazole phosphoribosyltransferase.